A 452-amino-acid chain; its full sequence is Keratin, type I cytoskeletal 42 (452 aa).

The tract at residues 4–93 (TTSVRQFSTS…GVSDALLGGS (90 aa)) is head. The tract at residues 94–129 (EKETMQNLNDRLATYLDRVRALEEANADLEVKIREW) is coil 1A. The IF rod domain maps to 94–405 (EKETMQNLND…RLLEGEDAHL (312 aa)). Positions 130–147 (YKKQGPGPARDYSPYFKT) are linker 1. Residues 148–239 (IEDLRNKILA…KNHEEEMNAL (92 aa)) form a coil 1B region. The segment at 240-262 (RGQVGGDVNVEMDAAPGVDLSRI) is linker 12. A coil 2 region spans residues 263–401 (LNEMRDQYEK…ATYRRLLEGE (139 aa)). The tail stretch occupies residues 402 to 452 (DAHLATQYSSSLASQPSREGMVTSRQVRTIVEEVQDGKVVSSREQVHRSTH).

It belongs to the intermediate filament family. Heterodimer of a type I and a type II keratin. Colocalizes with KRT8/KRT18 filament network. As to expression, expressed in nail matrix and nail bed epithelium (at protein level). Also expressed in tongue and digits with weak expression in vibrissae and in both filiform and fungiform papillae of oral mucosa.

It localises to the cytoplasm. In Mus musculus (Mouse), this protein is Keratin, type I cytoskeletal 42.